A 274-amino-acid chain; its full sequence is Large ribosomal subunit protein uL2 (274 aa).

A disordered region spans residues 223–256; that stretch reads VVMNPVDHPHGGGEGKTGEGRHPVDPWGNLTKGY. Positions 229–246 are enriched in basic and acidic residues; that stretch reads DHPHGGGEGKTGEGRHPV.

The protein belongs to the universal ribosomal protein uL2 family. In terms of assembly, part of the 50S ribosomal subunit. Forms a bridge to the 30S subunit in the 70S ribosome.

Its function is as follows. One of the primary rRNA binding proteins. Required for association of the 30S and 50S subunits to form the 70S ribosome, for tRNA binding and peptide bond formation. It has been suggested to have peptidyltransferase activity; this is somewhat controversial. Makes several contacts with the 16S rRNA in the 70S ribosome. This Albidiferax ferrireducens (strain ATCC BAA-621 / DSM 15236 / T118) (Rhodoferax ferrireducens) protein is Large ribosomal subunit protein uL2.